A 957-amino-acid polypeptide reads, in one-letter code: Glycine dehydrogenase (decarboxylating) (957 aa).

The residue at position 702 (Lys-702) is an N6-(pyridoxal phosphate)lysine.

The protein belongs to the GcvP family. In terms of assembly, the glycine cleavage system is composed of four proteins: P, T, L and H. Pyridoxal 5'-phosphate is required as a cofactor.

The enzyme catalyses N(6)-[(R)-lipoyl]-L-lysyl-[glycine-cleavage complex H protein] + glycine + H(+) = N(6)-[(R)-S(8)-aminomethyldihydrolipoyl]-L-lysyl-[glycine-cleavage complex H protein] + CO2. The glycine cleavage system catalyzes the degradation of glycine. The P protein binds the alpha-amino group of glycine through its pyridoxal phosphate cofactor; CO(2) is released and the remaining methylamine moiety is then transferred to the lipoamide cofactor of the H protein. The chain is Glycine dehydrogenase (decarboxylating) from Synechococcus sp. (strain RCC307).